We begin with the raw amino-acid sequence, 253 residues long: Sulfate transporter CysZ (253 aa).

Transmembrane regions (helical) follow at residues 31-51 (FVIL…WWLF), 75-95 (LLWP…FSTI), 151-171 (IVLL…PVLW), and 222-242 (IPLL…AMWV).

The protein belongs to the CysZ family.

It is found in the cell inner membrane. Functionally, high affinity, high specificity proton-dependent sulfate transporter, which mediates sulfate uptake. Provides the sulfur source for the cysteine synthesis pathway. The protein is Sulfate transporter CysZ of Escherichia coli O127:H6 (strain E2348/69 / EPEC).